The sequence spans 514 residues: MQQLNPSEISEIIKGRIDNLDVSSQARNEGTVVSVSDGIVRIHGLADVMYGEMIEFPGGVYGMALNLEQDSVGAVILGAYDTLAEGMSAKCTGRILEVPVGKELLGRVVDALGNPIDGKGPLGNTQTDAVEKVAPGVIWRKSVDQPVQTGYKSVDAMIPVGRGQRELIIGDRQIGKTAMAIDAIINQKDSGIFCVYVAVGQKRSTVANIVRKLEENGALANTIVVVASASESAALQFLAPYAGCTMGEFFRDRGEDALIVYDDLSKQAVAYRQISLLLRRPPGREAYPGDVFYLHSRLLERASRVSEEYVEKFTNGAVTGKTGSLTALPIIETQAGDVSAFVPTNVISITDGQIFLESAMFNSGIRPAVNAGVSVSRVGGAAQTKIIKKLSGGIRTALAQYRELAAFAQFASDLDEATRKQLEHGQRVTELMKQKQYAPMSIADMALSLYAAERGFLTDVEVSKIGSFEQALIAFFNRDHAELMAKINVKGDFNDEIDAGLKAGIEKFKATQTW.

Residue 170–177 (GDRQIGKT) participates in ATP binding.

The protein belongs to the ATPase alpha/beta chains family. F-type ATPases have 2 components, CF(1) - the catalytic core - and CF(0) - the membrane proton channel. CF(1) has five subunits: alpha(3), beta(3), gamma(1), delta(1), epsilon(1). CF(0) has three main subunits: a(1), b(2) and c(9-12). The alpha and beta chains form an alternating ring which encloses part of the gamma chain. CF(1) is attached to CF(0) by a central stalk formed by the gamma and epsilon chains, while a peripheral stalk is formed by the delta and b chains.

Its subcellular location is the cell inner membrane. The enzyme catalyses ATP + H2O + 4 H(+)(in) = ADP + phosphate + 5 H(+)(out). In terms of biological role, produces ATP from ADP in the presence of a proton gradient across the membrane. The alpha chain is a regulatory subunit. This Pseudomonas putida (strain GB-1) protein is ATP synthase subunit alpha.